Here is a 1441-residue protein sequence, read N- to C-terminus: MAFAAGGIDHHVAVDVEGEEESRRRAVAEEADLLWAAFERLPSAKRRSHAVVLPDPDGLGGGDGGGRGEGQLVDVRKLDRPGLQRVLRHALATSELDNANLLHGIKARFDAVGLEVPRVEVRFQNLTVSTDVHVGRRALPTLVNYVHDIAERILISSHLLRPDKHKLVILDDVSGVIKPGRMTLLLGPPASGKSTLLLALADKLDSQLKKSGEVAYNGMALDQFCVQRTSAYISQTDNHIGELTVRETLDFAAKCQGASENWQECLKELVNLEKERGIRPSPEIDAFMKTASFRREKHNLVSDYVLRVLGLDICADTPVGSDMERGVSGGQKKRVTTGEMIIGPRKTLLMDEISTGLDSSTTFQIVNCMRNFVHEMEATVLMSLLQPAPETFELFDDLILLSEGKIIYQGPIKHVVDYFKSLGFSLPPRKGIADFLQEVTSKKDQAQYWSDQSKQHIFVSASEMAAVFKESQYGTYLEANLSSSCGNKDSALVLPRSKFAVPKFSLVRACFARELILISRNRFLYTFRTCQVAFVGIITSTLFLRTRLHPVDEQNGNLYLACLFFGLVHMMFNGFTEMTMTISRLPVFYKQRDNFFHPAWAFSLPNWILRIPYSFIEAVVWSCVVYYTVGFAPTVDRFFRFMLLLFSIHQMALGLFRMMGAIARDMTIASTFGSAVLLAIFLLGGFVVPKGFIKPWWDWAYWISPLMYAQRAVSVNEFSASRWSKVSVSGNMTVGTNILISHSLPTDDHWFWIGVGVLLAYSIFFNIMFTLALAFLNPLRKPQSMVPSDAGDGRDVHINTDSNKNTIGEIFENNDGFEGQTECKSKKGMILPFQPLTMTFHNVNYYVNMPKEMQAKGVPEKRLQLLSEVSGIFRPRVLTALVGASGSGKTTLMDVLAGRKTGGYIEGDIRISGHKKEQRTFARIAGYVEQNDIHSPQVTVEESLWFSSTLRLPNDISRETRHAFVEEVMALVELDQIRYALVGKQGLTGLSTEQRKRLTIAVELVANPSIIFMDEPTSGLDARAAAIVMRTVRNTVDTGRTVVCTIHQPSIDIFEAFDELLLMKRGGRVIYGGSLGVNSVDMINYFQGIPRVVPITEGYNPATWMLEVTTQASEERLGIDFATVYKNSYQFRNVENLIVELSIPASGTEPLKFSSEFSQNRLTQFMVCLRKQSLVYWRSPEYNVVRLFFTSVAAIIFGSIFWNVGMKRESTEDILLLMGALYAACLFLGVNNASSVQPVVSVERTVYYRERAANMYSSFPYAAAQVYHGLVEIPYIAVQTLIFGLITYFMVNYERNIRKLVLYLIYMFLTFTYFTFYGMVAVGLTPTQHMASVVSSAFYSLWNLLSGFLIPQSRIPGWWIWFYYICPVAWTLRGVITSQLGDVDTRIVGPGFDGTVHEFLQQNLGFEQGMTGATVAVLVAFSVFFFSIYAISIKMINFQRS.

Residues 52-71 (VLPDPDGLGGGDGGGRGEGQ) form a disordered region. Residues 58–69 (GLGGGDGGGRGE) show a composition bias toward gly residues. One can recognise an ABC transporter 1 domain in the interval 154–428 (LISSHLLRPD…FKSLGFSLPP (275 aa)). 187–194 (GPPASGKS) provides a ligand contact to ATP. The ABC transmembrane type-2 1 domain occupies 505-718 (SLVRACFARE…AQRAVSVNEF (214 aa)). 6 helical membrane-spanning segments follow: residues 523–543 (FLYTFRTCQVAFVGIITSTLF), 558–578 (LYLACLFFGLVHMMFNGFTEM), 615–635 (FIEAVVWSCVVYYTVGFAPTV), 642–662 (MLLLFSIHQMALGLFRMMGAI), 668–688 (IASTFGSAVLLAIFLLGGFVV), and 751–771 (FWIGVGVLLAYSIFFNIMFTL). One can recognise an ABC transporter 2 domain in the interval 838 to 1090 (MTFHNVNYYV…DMINYFQGIP (253 aa)). An ATP-binding site is contributed by 883-890 (GASGSGKT). The region spanning 1163-1380 (TQFMVCLRKQ…TLRGVITSQL (218 aa)) is the ABC transmembrane type-2 2 domain. 7 consecutive transmembrane segments (helical) span residues 1184 to 1204 (VVRLFFTSVAAIIFGSIFWNV), 1214 to 1234 (ILLLMGALYAACLFLGVNNAS), 1271 to 1291 (VEIPYIAVQTLIFGLITYFMV), 1300 to 1320 (LVLYLIYMFLTFTYFTFYGMV), 1330 to 1350 (MASVVSSAFYSLWNLLSGFLI), 1355 to 1375 (IPGWWIWFYYICPVAWTLRGV), and 1413 to 1433 (ATVAVLVAFSVFFFSIYAISI).

It belongs to the ABC transporter superfamily. ABCG family. PDR (TC 3.A.1.205) subfamily.

Its subcellular location is the membrane. Functionally, may be a general defense protein. In Oryza sativa subsp. japonica (Rice), this protein is ABC transporter G family member 51.